A 264-amino-acid polypeptide reads, in one-letter code: Thymidylate synthase (264 aa).

Arg-21 is a binding site for dUMP. His-51 is a binding site for (6R)-5,10-methylene-5,6,7,8-tetrahydrofolate. DUMP is bound at residue 126-127 (RR). Cys-146 functions as the Nucleophile in the catalytic mechanism. Residues 166–169 (RSAD), Asn-177, and 207–209 (HIY) contribute to the dUMP site. Asp-169 contributes to the (6R)-5,10-methylene-5,6,7,8-tetrahydrofolate binding site. Ala-263 is a binding site for (6R)-5,10-methylene-5,6,7,8-tetrahydrofolate.

The protein belongs to the thymidylate synthase family. Bacterial-type ThyA subfamily. As to quaternary structure, homodimer.

Its subcellular location is the cytoplasm. It catalyses the reaction dUMP + (6R)-5,10-methylene-5,6,7,8-tetrahydrofolate = 7,8-dihydrofolate + dTMP. Its pathway is pyrimidine metabolism; dTTP biosynthesis. Catalyzes the reductive methylation of 2'-deoxyuridine-5'-monophosphate (dUMP) to 2'-deoxythymidine-5'-monophosphate (dTMP) while utilizing 5,10-methylenetetrahydrofolate (mTHF) as the methyl donor and reductant in the reaction, yielding dihydrofolate (DHF) as a by-product. This enzymatic reaction provides an intracellular de novo source of dTMP, an essential precursor for DNA biosynthesis. This chain is Thymidylate synthase, found in Coxiella burnetii (strain Dugway 5J108-111).